The following is a 23-amino-acid chain: Phospholipase A1 verutoxin-1 (23 aa).

It belongs to the AB hydrolase superfamily. Lipase family. Post-translationally, contains six disulfide bonds. Expressed by the venom gland.

Its subcellular location is the secreted. The enzyme catalyses a 1,2-diacyl-sn-glycero-3-phosphocholine + H2O = a 2-acyl-sn-glycero-3-phosphocholine + a fatty acid + H(+). It catalyses the reaction 1-(9Z-octadecenoyl)-2-hexadecanoyl-sn-glycero-3-phosphocholine + H2O = 2-hexadecanoyl-sn-glycero-3-phosphocholine + (9Z)-octadecenoate + H(+). It carries out the reaction a 1-acyl-sn-glycero-3-phosphocholine + H2O = sn-glycerol 3-phosphocholine + a fatty acid + H(+). It participates in phospholipid metabolism. Activity is maximal in the presence of calcium. However, unlike phospholipases A2 whose catalytic activity is strictly calcium-dependent, this enzyme shows considerable catalytic activity on phosphatidylcholine emulsified in calcium free solution; the catalytic activity of VT-1 assayed in the absence of calcium ions is 18-20% of that assayed in solution containing calcium ions. Catalyzes the hydrolysis of glycerophospholipids such as phosphatidylcholine (1,2-diacyl-sn-glycero-3-phosphocholine) and has a moderate activity to hydrolyze lysoglycerophospholipids such as lysophosphatidylcholine (1-acyl-sn-glycero-3-phosphocholine), but is unable to hydrolyze sphingomyelin. Liberates the fatty acid from the sn-1 position of 1,2-diacyl-sn-glycero-3-phosphocholine mainly, indicating phospholipase activity of the A1 type. In addition to acting as an allergen, it possesses a moderate hemolytic activity on red blood cells of mice (3% of hemolysis at 3.0 ug/ml). This is Phospholipase A1 verutoxin-1 from Vespa velutina (Asian yellow-legged hornet).